The following is a 137-amino-acid chain: Cofilin (137 aa).

Residues 5–135 (GVKVSPECLE…AYETVLEKVT (131 aa)) enclose the ADF-H domain.

The protein belongs to the actin-binding proteins ADF family.

The protein localises to the cytoplasm. It is found in the cytoskeleton. Its subcellular location is the nucleus matrix. In terms of biological role, controls reversibly actin polymerization and depolymerization in a pH-sensitive manner. It has the ability to bind G- and F-actin in a 1:1 ratio of cofilin to actin. Binding to F-actin is regulated by tropomyosin. It is the major component of intranuclear and cytoplasmic actin rods. Required for accumulation of actin at the cell division site via depolymerizing actin at the cell ends. In association with myosin II has a role in the assembly of the contractile ring via severing actin filaments. Involved in the maintenance of the contractile ring once formed. In association with profilin and capping protein, has a role in the mitotic reorganization of the actin cytoskeleton. Severs actin filaments (F-actin). The sequence is that of Cofilin (cof1) from Schizosaccharomyces pombe (strain 972 / ATCC 24843) (Fission yeast).